We begin with the raw amino-acid sequence, 58 residues long: Sperm histone P2b (58 aa).

The disordered stretch occupies residues 20–41; it reads LRRRRYRSSRRRRRRPCRRRRH.

The protein belongs to the protamine P2 family. As to expression, testis.

It is found in the nucleus. It localises to the chromosome. Its function is as follows. Protamines substitute for histones in the chromatin of sperm during the haploid phase of spermatogenesis. They compact sperm DNA into a highly condensed, stable and inactive complex. This chain is Sperm histone P2b, found in Equus caballus (Horse).